A 670-amino-acid chain; its full sequence is Catalase (670 aa).

Catalysis depends on residues histidine 61 and asparagine 132. A heme-binding site is contributed by tyrosine 345.

It belongs to the catalase family. In terms of assembly, homotetramer. The cofactor is heme.

It localises to the peroxisome matrix. The catalysed reaction is 2 H2O2 = O2 + 2 H2O. Its function is as follows. Catalyzes the degradation of hydrogen peroxide (H(2)O(2)) generated by peroxisomal oxidases to water and oxygen, thereby protecting cells from the toxic effects of hydrogen peroxide. This chain is Catalase, found in Penicillium janthinellum (Penicillium vitale).